The sequence spans 371 residues: Cytochrome b (371 aa).

4 helical membrane-spanning segments follow: residues 25 to 45, 69 to 90, 105 to 125, and 170 to 190; these read FGSM…FLAI, WTMQ…YTHI, WLSG…GYVL, and FFAL…VHII. 2 residues coordinate heme b: H75 and H89. Heme b contacts are provided by H174 and H188. H193 is a binding site for a ubiquinone. 4 helical membrane-spanning segments follow: residues 218–238, 280–300, 312–332, and 339–358; these read YKDM…MSFS, LGGT…PFTH, FTQL…WTAT, and FILI…IINP.

Belongs to the cytochrome b family. As to quaternary structure, the cytochrome bc1 complex contains 3 respiratory subunits (MT-CYB, CYC1 and UQCRFS1), 2 core proteins (UQCRC1 and UQCRC2) and probably 6 low-molecular weight proteins. It depends on heme b as a cofactor.

It is found in the mitochondrion inner membrane. In terms of biological role, component of the ubiquinol-cytochrome c reductase complex (complex III or cytochrome b-c1 complex) that is part of the mitochondrial respiratory chain. The b-c1 complex mediates electron transfer from ubiquinol to cytochrome c. Contributes to the generation of a proton gradient across the mitochondrial membrane that is then used for ATP synthesis. The polypeptide is Cytochrome b (MT-CYB) (Elapognathus coronatus (Western crowned snake)).